The primary structure comprises 85 residues: Cell division topological specificity factor (85 aa).

Belongs to the MinE family.

In terms of biological role, prevents the cell division inhibition by proteins MinC and MinD at internal division sites while permitting inhibition at polar sites. This ensures cell division at the proper site by restricting the formation of a division septum at the midpoint of the long axis of the cell. The protein is Cell division topological specificity factor of Xylella fastidiosa (strain M23).